A 239-amino-acid chain; its full sequence is tRNA (guanine-N(1)-)-methyltransferase (239 aa).

Residues Gly-110 and 130 to 135 contribute to the S-adenosyl-L-methionine site; that span reads IGDYVL.

It belongs to the RNA methyltransferase TrmD family. In terms of assembly, homodimer.

The protein resides in the cytoplasm. The enzyme catalyses guanosine(37) in tRNA + S-adenosyl-L-methionine = N(1)-methylguanosine(37) in tRNA + S-adenosyl-L-homocysteine + H(+). In terms of biological role, specifically methylates guanosine-37 in various tRNAs. The polypeptide is tRNA (guanine-N(1)-)-methyltransferase (Borrelia garinii subsp. bavariensis (strain ATCC BAA-2496 / DSM 23469 / PBi) (Borreliella bavariensis)).